Reading from the N-terminus, the 493-residue chain is Probable cytosol aminopeptidase (493 aa).

Mn(2+) is bound by residues K256 and D261. Residue K268 is part of the active site. D279, D338, and E340 together coordinate Mn(2+). The active site involves R342.

The protein belongs to the peptidase M17 family. Mn(2+) serves as cofactor.

The protein localises to the cytoplasm. It catalyses the reaction Release of an N-terminal amino acid, Xaa-|-Yaa-, in which Xaa is preferably Leu, but may be other amino acids including Pro although not Arg or Lys, and Yaa may be Pro. Amino acid amides and methyl esters are also readily hydrolyzed, but rates on arylamides are exceedingly low.. It carries out the reaction Release of an N-terminal amino acid, preferentially leucine, but not glutamic or aspartic acids.. Functionally, presumably involved in the processing and regular turnover of intracellular proteins. Catalyzes the removal of unsubstituted N-terminal amino acids from various peptides. The sequence is that of Probable cytosol aminopeptidase from Phytoplasma australiense.